Reading from the N-terminus, the 308-residue chain is MGDNLLTMLGFLNLNKPGGWTSHDCVAKIRRLLKIKRVGHGGTLDPAATGVLPIAVGKATRLLPFLPEKKAYQARIRLGVTTNTDDLQGEILQIGSANHLTLEQIDPLLRQFIGEIEQIPPAFSAISQGGKRLYELARKGELVTPPSRIVHVEKINILDWYPGEHPELELEIICGGGTYIRSIARDLGNLLGVGGTLANLIRTQSCGLELSKSLTLADLETQQHQGNLPLIFPQLALKHLLTISLSAPEARRWCQGQSIVIINSIKLPQSQSVQVVGENGDFLGIGEIATVNISDDREQTLIPKVVLS.

The active-site Nucleophile is the D45.

Belongs to the pseudouridine synthase TruB family. Type 1 subfamily.

It catalyses the reaction uridine(55) in tRNA = pseudouridine(55) in tRNA. Functionally, responsible for synthesis of pseudouridine from uracil-55 in the psi GC loop of transfer RNAs. This Gloeothece citriformis (strain PCC 7424) (Cyanothece sp. (strain PCC 7424)) protein is tRNA pseudouridine synthase B.